The sequence spans 290 residues: Expansin-A26 (290 aa).

The N-terminal stretch at 1–29 (MDTTTTMAPLPLLTTTSLLLFFFLASSFA) is a signal peptide. Residues 45–67 (DGGGDGEGGGGGDGEGGGGGGGA) are disordered. In terms of domain architecture, Expansin-like EG45 spans 101-196 (GGACGYKDAD…RKVACVRQGG (96 aa)). The Expansin-like CBD domain occupies 206 to 286 (SYNMVMVKNV…DWTYDNTYQA (81 aa)). A glycan (N-linked (GlcNAc...) asparagine) is linked at asparagine 250.

Belongs to the expansin family. Expansin A subfamily. Expressed in flowers.

The protein localises to the secreted. It localises to the cell wall. The protein resides in the membrane. May cause loosening and extension of plant cell walls by disrupting non-covalent bonding between cellulose microfibrils and matrix glucans. No enzymatic activity has been found. May be required for rapid internodal elongation in deepwater rice during submergence. The polypeptide is Expansin-A26 (EXPA26) (Oryza sativa subsp. japonica (Rice)).